The following is a 263-amino-acid chain: Achaete-scute homolog 2 (263 aa).

Disordered regions lie at residues 104-126 and 194-248; these read RRRR…RNER and PPSD…ELSP. 3 stretches are compositionally biased toward low complexity: residues 110–121, 202–220, and 230–247; these read ATEASSSSAAVA, PSAS…SPSP, and SPRS…GELS. The 53-residue stretch at 118-170 folds into the bHLH domain; that stretch reads AAVARRNERERNRVKLVNLGFQALRQHVPHGGANKKLSKVETLRSAVEYIRAL.

As to quaternary structure, efficient DNA binding requires dimerization with another basic helix-loop-helix (bHLH) protein. Forms heterodimers with bHLH transcription factor TCF3. May not heterodimerise with bHLH protein HAND1. As to expression, expressed in follicular T-helper (Tfh) cells.

The protein resides in the nucleus. Functionally, transcription factor. Binds to E-box motifs 5'-CANNTG-3' in the regulatory elements of target genes, probably as a heterodimer with another basic helix-loop-helix (bHLH) protein such as the transcription factor TCF3. May bind both open and closed chromatin, acting as a pioneer transcription factor to allow other factors to bind and activate lineage-specific genes. Required during post-implantation development for the generation of some differentiated trophoblast cell types. Transcriptional activity of ASCL2 may be antagonised in a subset of trophoblast cells by bHLH transcription factor HAND1, perhaps by competing for dimerization with other bHLH proteins. Involved in differentiation and function of follicular T-helper (Tfh) cells, thereby playing a role in germinal center responses; probably modulates expression of genes involved in Tfh cell function, such as BCL6. May also act as a suppressor of Th1-, Th2- and Th17-cell differentiation. Induces the formation of stem cells in intestinal crypts in vitro, synergistically activating transcription of target genes, such as SOX9, together with TCF4/beta-catenin. May form a bistable transcriptional switch, controlling expression of its own gene together with Wnt/R-spondin signaling, and thereby maintaining stem cell characteristics. Modulates expression of target genes, including perhaps down-regulating EGR1/Krox24 and chemokine CXCL10/Mob-1 and up-regulating CXCR4 and CDKN1C/p57kip2, in Schwann cells. May play a role in reducing proliferation of Schwann cells, perhaps acting via modulation of expression of CDKN1C. May be dispensable for blastocyst formation and later embryonic function. May be involved in the determination of neuronal precursors. This Mus musculus (Mouse) protein is Achaete-scute homolog 2 (Ascl2).